The primary structure comprises 174 residues: Adipose-secreted signaling protein (174 aa).

An N-acetylalanine modification is found at Ala-2. The residue at position 147 (Thr-147) is a Phosphothreonine.

It belongs to the ADISSP family.

The protein resides in the secreted. Functionally, adipocyte-secreted protein (adipokine) that acts as a key regulator for white adipose tissue (WAT) thermogenesis and glucose homeostasis at least in part through activation of protein kinase A (PKA). The chain is Adipose-secreted signaling protein from Rattus norvegicus (Rat).